The following is a 373-amino-acid chain: Chaperone protein DnaJ (373 aa).

A J domain is found at 4 to 69; sequence SYYEILEITQ…EKRAIYDRYG (66 aa). A CR-type zinc finger spans residues 135–212; that stretch reads GCKKNIDFTY…CKGLGYNESK (78 aa). The Zn(2+) site is built by C148, C151, C164, C167, C186, C189, C200, and C203. 4 CXXCXGXG motif repeats span residues 148–155, 164–171, 186–193, and 200–207; these read CKTCNGTG, CPKCQGRG, CPDCQGIG, and CSDCKGLG.

Belongs to the DnaJ family. In terms of assembly, homodimer. It depends on Zn(2+) as a cofactor.

It localises to the cytoplasm. In terms of biological role, participates actively in the response to hyperosmotic and heat shock by preventing the aggregation of stress-denatured proteins and by disaggregating proteins, also in an autonomous, DnaK-independent fashion. Unfolded proteins bind initially to DnaJ; upon interaction with the DnaJ-bound protein, DnaK hydrolyzes its bound ATP, resulting in the formation of a stable complex. GrpE releases ADP from DnaK; ATP binding to DnaK triggers the release of the substrate protein, thus completing the reaction cycle. Several rounds of ATP-dependent interactions between DnaJ, DnaK and GrpE are required for fully efficient folding. Also involved, together with DnaK and GrpE, in the DNA replication of plasmids through activation of initiation proteins. This is Chaperone protein DnaJ from Campylobacter jejuni subsp. jejuni serotype O:2 (strain ATCC 700819 / NCTC 11168).